Consider the following 246-residue polypeptide: Small ribosomal subunit protein uS2 (246 aa).

The protein belongs to the universal ribosomal protein uS2 family.

This Burkholderia cenocepacia (strain HI2424) protein is Small ribosomal subunit protein uS2.